Consider the following 378-residue polypeptide: Erythronate-4-phosphate dehydrogenase (378 aa).

Substrate-binding residues include S45 and T66. NAD(+) is bound by residues D146 and T175. R208 is an active-site residue. D232 is a binding site for NAD(+). The active site involves E237. H254 (proton donor) is an active-site residue. G257 is a binding site for NAD(+). Y258 contributes to the substrate binding site.

It belongs to the D-isomer specific 2-hydroxyacid dehydrogenase family. PdxB subfamily. In terms of assembly, homodimer.

The protein localises to the cytoplasm. It carries out the reaction 4-phospho-D-erythronate + NAD(+) = (R)-3-hydroxy-2-oxo-4-phosphooxybutanoate + NADH + H(+). It participates in cofactor biosynthesis; pyridoxine 5'-phosphate biosynthesis; pyridoxine 5'-phosphate from D-erythrose 4-phosphate: step 2/5. Its function is as follows. Catalyzes the oxidation of erythronate-4-phosphate to 3-hydroxy-2-oxo-4-phosphonooxybutanoate. This Escherichia coli O81 (strain ED1a) protein is Erythronate-4-phosphate dehydrogenase.